Consider the following 173-residue polypeptide: Ribosome maturation factor RimM (173 aa).

Residues 95–169 (EGSYYFKDIL…RIEVTLLEGL (75 aa)) form the PRC barrel domain.

Belongs to the RimM family. Binds ribosomal protein uS19.

It localises to the cytoplasm. Its function is as follows. An accessory protein needed during the final step in the assembly of 30S ribosomal subunit, possibly for assembly of the head region. Essential for efficient processing of 16S rRNA. May be needed both before and after RbfA during the maturation of 16S rRNA. It has affinity for free ribosomal 30S subunits but not for 70S ribosomes. In Lactobacillus johnsonii (strain CNCM I-12250 / La1 / NCC 533), this protein is Ribosome maturation factor RimM.